Here is a 340-residue protein sequence, read N- to C-terminus: Phosphoribosylformylglycinamidine cyclo-ligase (340 aa).

It belongs to the AIR synthase family.

Its subcellular location is the cytoplasm. The enzyme catalyses 2-formamido-N(1)-(5-O-phospho-beta-D-ribosyl)acetamidine + ATP = 5-amino-1-(5-phospho-beta-D-ribosyl)imidazole + ADP + phosphate + H(+). It functions in the pathway purine metabolism; IMP biosynthesis via de novo pathway; 5-amino-1-(5-phospho-D-ribosyl)imidazole from N(2)-formyl-N(1)-(5-phospho-D-ribosyl)glycinamide: step 2/2. The protein is Phosphoribosylformylglycinamidine cyclo-ligase of Streptococcus pyogenes serotype M12 (strain MGAS2096).